We begin with the raw amino-acid sequence, 511 residues long: Zinc finger and BTB domain-containing protein 45 (511 aa).

A BTB domain is found at 33–96 (CDVTVRIREA…LYSGSLVVAQ (64 aa)). Over residues 159–168 (ARPPGHPGAA) the composition is skewed to low complexity. Disordered stretches follow at residues 159 to 241 (ARPP…PDCA) and 294 to 403 (EDGA…PPTY). Positions 206 to 224 (RGDEDDEESDDETDGEDGE) are enriched in acidic residues. Positions 339–360 (PGPPAPPPSAPSGPAPAPPPAF) are enriched in pro residues. Residues 378-397 (PAPSAAPTTAPSGTPARTPG) are compositionally biased toward low complexity. 4 C2H2-type zinc fingers span residues 403 to 425 (YECSHCRKTFSSRKNYTKHMFIH), 431 to 453 (HQCAVCWRSFSLRDYLLKHMVTH), 459 to 481 (FQCAVCAKRFTQKSSLNVHMRTH), and 486 to 508 (APCPACGKVFSHRALLERHLAAH).

The protein belongs to the krueppel C2H2-type zinc-finger protein family.

It is found in the nucleus. Its function is as follows. May be involved in transcriptional regulation. In the central nervous system, may play a role in glial cell differentiation. The chain is Zinc finger and BTB domain-containing protein 45 (ZBTB45) from Homo sapiens (Human).